The sequence spans 447 residues: Cysteine--tRNA ligase (447 aa).

Residue C28 coordinates Zn(2+). The 'HIGH' region signature appears at 30–40 (PTVYNYIHVGN). The Zn(2+) site is built by C211, H236, and E240. The short motif at 268–272 (KMSKS) is the 'KMSKS' region element. Residue K271 coordinates ATP.

The protein belongs to the class-I aminoacyl-tRNA synthetase family. As to quaternary structure, monomer. Requires Zn(2+) as cofactor.

Its subcellular location is the cytoplasm. The enzyme catalyses tRNA(Cys) + L-cysteine + ATP = L-cysteinyl-tRNA(Cys) + AMP + diphosphate. The polypeptide is Cysteine--tRNA ligase (Streptococcus pneumoniae serotype 4 (strain ATCC BAA-334 / TIGR4)).